The following is a 236-amino-acid chain: Ubiquinone biosynthesis O-methyltransferase (236 aa).

S-adenosyl-L-methionine-binding residues include arginine 39, glycine 59, aspartate 80, and methionine 124.

The protein belongs to the methyltransferase superfamily. UbiG/COQ3 family.

The enzyme catalyses a 3-demethylubiquinol + S-adenosyl-L-methionine = a ubiquinol + S-adenosyl-L-homocysteine + H(+). It carries out the reaction a 3-(all-trans-polyprenyl)benzene-1,2-diol + S-adenosyl-L-methionine = a 2-methoxy-6-(all-trans-polyprenyl)phenol + S-adenosyl-L-homocysteine + H(+). It participates in cofactor biosynthesis; ubiquinone biosynthesis. Functionally, O-methyltransferase that catalyzes the 2 O-methylation steps in the ubiquinone biosynthetic pathway. The chain is Ubiquinone biosynthesis O-methyltransferase from Shewanella sp. (strain MR-7).